A 208-amino-acid polypeptide reads, in one-letter code: Small ribosomal subunit protein uS4 (208 aa).

Residues 95 to 155 (TRLDALVLRA…AKSQTMVPFQ (61 aa)) enclose the S4 RNA-binding domain.

The protein belongs to the universal ribosomal protein uS4 family. As to quaternary structure, part of the 30S ribosomal subunit. Contacts protein S5. The interaction surface between S4 and S5 is involved in control of translational fidelity.

One of the primary rRNA binding proteins, it binds directly to 16S rRNA where it nucleates assembly of the body of the 30S subunit. Its function is as follows. With S5 and S12 plays an important role in translational accuracy. The chain is Small ribosomal subunit protein uS4 from Bifidobacterium adolescentis (strain ATCC 15703 / DSM 20083 / NCTC 11814 / E194a).